The following is a 102-amino-acid chain: Small ribosomal subunit protein uS10 (102 aa).

It belongs to the universal ribosomal protein uS10 family. As to quaternary structure, part of the 30S ribosomal subunit.

Involved in the binding of tRNA to the ribosomes. The polypeptide is Small ribosomal subunit protein uS10 (Rhodopseudomonas palustris (strain HaA2)).